A 525-amino-acid chain; its full sequence is Nucleolar complex protein 4 homolog B (525 aa).

A compositionally biased stretch (basic residues) spans 1–10 (MAARKAKHAF). Residues 1 to 21 (MAARKAKHAFRSQATQSDAER) form a disordered region. 3 helical membrane-spanning segments follow: residues 307-327 (AAYDVGGAISLLALNGLFILI), 358-378 (FFHLANLFLSSTHLPVYLVAA), and 386-406 (LALTAPPQVLLMIIPFICNLI).

The protein belongs to the CBF/MAK21 family.

Its subcellular location is the nucleus membrane. It is found in the nucleus. The protein localises to the nucleolus. The chain is Nucleolar complex protein 4 homolog B (noc4l-b) from Xenopus laevis (African clawed frog).